A 129-amino-acid chain; its full sequence is Glycine cleavage system H protein (129 aa).

The Lipoyl-binding domain maps to 24–106 (AVRIGLSAYA…HGEGWLLVIQ (83 aa)). At K65 the chain carries N6-lipoyllysine.

Belongs to the GcvH family. As to quaternary structure, the glycine cleavage system is composed of four proteins: P, T, L and H. Requires (R)-lipoate as cofactor.

In terms of biological role, the glycine cleavage system catalyzes the degradation of glycine. The H protein shuttles the methylamine group of glycine from the P protein to the T protein. The chain is Glycine cleavage system H protein from Synechococcus sp. (strain WH7803).